We begin with the raw amino-acid sequence, 555 residues long: Methionine--tRNA ligase (555 aa).

The 'HIGH' region motif lies at 13–23 (PYANGSLHIGH). Zn(2+) is bound by residues cysteine 144, cysteine 147, cysteine 157, and cysteine 160. The short motif at 330 to 334 (KISKS) is the 'KMSKS' region element. Lysine 333 lines the ATP pocket.

It belongs to the class-I aminoacyl-tRNA synthetase family. MetG type 1 subfamily. Monomer. Zn(2+) serves as cofactor.

Its subcellular location is the cytoplasm. The enzyme catalyses tRNA(Met) + L-methionine + ATP = L-methionyl-tRNA(Met) + AMP + diphosphate. Is required not only for elongation of protein synthesis but also for the initiation of all mRNA translation through initiator tRNA(fMet) aminoacylation. This is Methionine--tRNA ligase from Blochmanniella pennsylvanica (strain BPEN).